The sequence spans 198 residues: TM2 domain-containing protein 2 (198 aa).

The signal sequence occupies residues 1–27 (MRWPVPPVGYLLLGGQGLLLTFSLISS). The Extracellular portion of the chain corresponds to 28–128 (QNQTSPVTYP…FLRGNKPCIK (101 aa)). Residues Asn-29, Asn-40, and Asn-76 are each glycosylated (N-linked (GlcNAc...) asparagine). A helical membrane pass occupies residues 129–149 (YTGHYFITTLLYSFFLGCFGV). The TM2 domain maps to 131–179 (GHYFITTLLYSFFLGCFGVDRFCLGHTGTAVGKLLTLGGLGIWWFVDLI). The Cytoplasmic segment spans residues 150–166 (DRFCLGHTGTAVGKLLT). The chain crosses the membrane as a helical span at residues 167–187 (LGGLGIWWFVDLILLITGGLM). Residues 188 to 198 (PSDNSNWCTIY) are Extracellular-facing.

Belongs to the TM2 family.

The protein resides in the membrane. This is TM2 domain-containing protein 2 (tm2d2) from Xenopus tropicalis (Western clawed frog).